We begin with the raw amino-acid sequence, 340 residues long: Extracellular matrix protein-binding protein emp (340 aa).

The signal sequence occupies residues Met-1–Ala-26.

The protein resides in the cell surface. Its function is as follows. Adhesin that binds to the host cell extracellular matrix proteins fibronectin, fibrinogen, collagen, and vitronectin. This is Extracellular matrix protein-binding protein emp (emp) from Staphylococcus aureus.